A 326-amino-acid polypeptide reads, in one-letter code: Beta-ketoacyl-[acyl-carrier-protein] synthase III (326 aa).

Catalysis depends on residues Cys112 and His251. Residues 252 to 256 (QANSR) are ACP-binding. Asn281 is an active-site residue.

The protein belongs to the thiolase-like superfamily. FabH family. As to quaternary structure, homodimer.

The protein localises to the cytoplasm. The enzyme catalyses malonyl-[ACP] + acetyl-CoA + H(+) = 3-oxobutanoyl-[ACP] + CO2 + CoA. Its pathway is lipid metabolism; fatty acid biosynthesis. Functionally, catalyzes the condensation reaction of fatty acid synthesis by the addition to an acyl acceptor of two carbons from malonyl-ACP. Catalyzes the first condensation reaction which initiates fatty acid synthesis and may therefore play a role in governing the total rate of fatty acid production. Possesses both acetoacetyl-ACP synthase and acetyl transacylase activities. Its substrate specificity determines the biosynthesis of branched-chain and/or straight-chain of fatty acids. This chain is Beta-ketoacyl-[acyl-carrier-protein] synthase III, found in Clostridium botulinum (strain Okra / Type B1).